We begin with the raw amino-acid sequence, 210 residues long: Putative 3-methyladenine DNA glycosylase (210 aa).

It belongs to the DNA glycosylase MPG family.

In Lactobacillus helveticus (strain DPC 4571), this protein is Putative 3-methyladenine DNA glycosylase.